Reading from the N-terminus, the 81-residue chain is Cortexin-2 (81 aa).

A helical transmembrane segment spans residues 29–49 (TGFAFVGILCIFLGLLIIRCF).

Belongs to the cortexin family.

It localises to the membrane. The sequence is that of Cortexin-2 (Ctxn2) from Mus musculus (Mouse).